Consider the following 389-residue polypeptide: Flap endonuclease 1 (389 aa).

The tract at residues 1–110 is N-domain; that stretch reads MGIKGLMKLL…GELAKRSDRR (110 aa). Aspartate 35 is a binding site for Mg(2+). Residues arginine 48 and arginine 76 each contribute to the DNA site. Residue aspartate 92 coordinates Mg(2+). A disordered region spans residues 103-124; it reads LAKRSDRRQEAQKALEEATEKG. Residues 128–259 form an I-domain region; that stretch reads DIDRFNKRLV…KKAYAGIKEH (132 aa). Residues glutamate 164, glutamate 166, aspartate 185, and aspartate 187 each contribute to the Mg(2+) site. Glutamate 164 contributes to the DNA binding site. The DNA site is built by glycine 237 and aspartate 239. Aspartate 239 is a binding site for Mg(2+). The interval 350–358 is interaction with PCNA; sequence SQKRLDSFF. The interval 362-389 is disordered; that stretch reads PSANGAKKRKAPAAKGGKKAATAKKGKK. Basic residues predominate over residues 367–389; it reads AKKRKAPAAKGGKKAATAKKGKK.

It belongs to the XPG/RAD2 endonuclease family. FEN1 subfamily. In terms of assembly, interacts with PCNA. Three molecules of FEN1 bind to one PCNA trimer with each molecule binding to one PCNA monomer. PCNA stimulates the nuclease activity without altering cleavage specificity. The cofactor is Mg(2+). In terms of processing, phosphorylated. Phosphorylation upon DNA damage induces relocalization to the nuclear plasma.

It is found in the nucleus. The protein localises to the nucleolus. The protein resides in the nucleoplasm. Its subcellular location is the mitochondrion. In terms of biological role, structure-specific nuclease with 5'-flap endonuclease and 5'-3' exonuclease activities involved in DNA replication and repair. During DNA replication, cleaves the 5'-overhanging flap structure that is generated by displacement synthesis when DNA polymerase encounters the 5'-end of a downstream Okazaki fragment. It enters the flap from the 5'-end and then tracks to cleave the flap base, leaving a nick for ligation. Also involved in the long patch base excision repair (LP-BER) pathway, by cleaving within the apurinic/apyrimidinic (AP) site-terminated flap. Acts as a genome stabilization factor that prevents flaps from equilibrating into structures that lead to duplications and deletions. Also possesses 5'-3' exonuclease activity on nicked or gapped double-stranded DNA, and exhibits RNase H activity. Also involved in replication and repair of rDNA and in repairing mitochondrial DNA. In Phytophthora infestans (strain T30-4) (Potato late blight agent), this protein is Flap endonuclease 1.